Consider the following 284-residue polypeptide: Cell division protein FtsQ (284 aa).

Over 1 to 31 (MAQLPASMRRKRAAITSIHDKPPTRKQKLAN) the chain is Cytoplasmic. The helical transmembrane segment at 32–52 (AGGWVLLVIAFVVLAVGIYGL) threads the bilayer. The Periplasmic portion of the chain corresponds to 53–284 (YKVITDATVA…SIAGGTKAKP (232 aa)). A POTRA domain is found at 59–128 (ATVAKLEVVG…NGIRVRVMPR (70 aa)).

The protein belongs to the FtsQ/DivIB family. FtsQ subfamily. As to quaternary structure, part of a complex composed of FtsB, FtsL and FtsQ.

It is found in the cell inner membrane. In terms of biological role, essential cell division protein. May link together the upstream cell division proteins, which are predominantly cytoplasmic, with the downstream cell division proteins, which are predominantly periplasmic. May control correct divisome assembly. The chain is Cell division protein FtsQ from Acinetobacter oleivorans (strain JCM 16667 / KCTC 23045 / DR1).